The chain runs to 262 residues: Acetaldehyde dehydrogenase 7 (262 aa).

Ser-10 to Ile-13 provides a ligand contact to NAD(+). Residue Cys-128 is the Acyl-thioester intermediate of the active site. Ser-159–Asn-167 serves as a coordination point for NAD(+).

It belongs to the acetaldehyde dehydrogenase family.

It catalyses the reaction acetaldehyde + NAD(+) + CoA = acetyl-CoA + NADH + H(+). In Rhodococcus jostii (strain RHA1), this protein is Acetaldehyde dehydrogenase 7.